The primary structure comprises 294 residues: Putative S-adenosyl-L-methionine-dependent methyltransferase RHA1_ro00605 (294 aa).

S-adenosyl-L-methionine-binding positions include Asp120 and 149–150; that span reads DL.

The protein belongs to the UPF0677 family.

In terms of biological role, exhibits S-adenosyl-L-methionine-dependent methyltransferase activity. This chain is Putative S-adenosyl-L-methionine-dependent methyltransferase RHA1_ro00605, found in Rhodococcus jostii (strain RHA1).